Consider the following 175-residue polypeptide: Large ribosomal subunit protein uL16 (175 aa).

This sequence belongs to the universal ribosomal protein uL16 family.

This is Large ribosomal subunit protein uL16 from Caldivirga maquilingensis (strain ATCC 700844 / DSM 13496 / JCM 10307 / IC-167).